The sequence spans 433 residues: V-type ATP synthase beta chain (433 aa).

Belongs to the ATPase alpha/beta chains family.

Produces ATP from ADP in the presence of a proton gradient across the membrane. The V-type beta chain is a regulatory subunit. This chain is V-type ATP synthase beta chain, found in Borrelia turicatae (strain 91E135).